Reading from the N-terminus, the 2595-residue chain is Glucosylceramide transporter ABCA12 (2595 aa).

Residues 23–43 form a helical membrane-spanning segment; sequence PLWTLVLILWPVIIFIILAIT. The segment covering 109 to 119 has biased composition (basic and acidic residues); sequence LKKPSNPKRDS. The disordered stretch occupies residues 109 to 143; it reads LKKPSNPKRDSNLSLRSTQVPERSHTSLATVPPRP. N-linked (GlcNAc...) asparagine glycosylation is found at asparagine 120, asparagine 156, asparagine 174, asparagine 214, asparagine 275, asparagine 331, asparagine 365, asparagine 381, asparagine 410, asparagine 433, asparagine 455, asparagine 526, asparagine 541, asparagine 574, asparagine 605, asparagine 645, asparagine 749, asparagine 773, asparagine 812, asparagine 823, asparagine 854, asparagine 917, and asparagine 960. Positions 120 to 137 are enriched in polar residues; it reads NLSLRSTQVPERSHTSLA. 3 consecutive transmembrane segments (helical) span residues 1062–1082, 1109–1129, and 1142–1162; these read VSYS…AAFV, FAWL…LIVI, and FILF…SYLI. An N-linked (GlcNAc...) asparagine glycan is attached at asparagine 1167. The next 3 membrane-spanning stretches (helical) occupy residues 1171-1191, 1197-1217, and 1247-1267; these read IAAL…IVLV, LSYV…SYAS, and FGWL…IAWY. A glycan (N-linked (GlcNAc...) asparagine) is linked at asparagine 1319. In terms of domain architecture, ABC transporter 1 spans 1346-1577; that stretch reads VALHGVTKIY…FGDGYHLTLT (232 aa). 1378–1385 is a binding site for ATP; it reads GPNGAGKT. Asparagine 1524, asparagine 1663, asparagine 1673, asparagine 1686, asparagine 1690, and asparagine 1704 each carry an N-linked (GlcNAc...) asparagine glycan. The tract at residues 1672-1703 is disordered; sequence SNMSLEHLTQRKVGNPSANGTSTPDDLSVSSS. Over residues 1687 to 1703 the composition is skewed to polar residues; it reads PSANGTSTPDDLSVSSS. Residues 1747–1767 traverse the membrane as a helical segment; the sequence is LIAQVILPIVFVATAMGLGTL. N-linked (GlcNAc...) asparagine glycans are attached at residues asparagine 1819, asparagine 1835, asparagine 1876, asparagine 1921, and asparagine 1952. 7 consecutive transmembrane segments (helical) span residues 1979 to 1999, 2035 to 2055, 2072 to 2092, 2103 to 2123, 2143 to 2163, 2187 to 2207, and 2270 to 2290; these read ATIS…GYSV, FIYD…VIAI, LLLL…AGLF, VCVN…VYFL, IFLI…SQQQ, GAMF…RLLI, and IIAV…GLLG. In terms of domain architecture, ABC transporter 2 spans 2254–2489; it reads VQLHRLTKTY…FGRGFTVKVH (236 aa). 2290–2297 provides a ligand contact to ATP; that stretch reads GVNGAGKT. Residues asparagine 2318, asparagine 2542, and asparagine 2547 are each glycosylated (N-linked (GlcNAc...) asparagine). Residues 2575–2587 are compositionally biased toward polar residues; it reads VDTSSQGSTISVD. Positions 2575–2595 are disordered; the sequence is VDTSSQGSTISVDSQEDQLDS.

It belongs to the ABC transporter superfamily. ABCA family. In terms of assembly, interacts with NR1H2 and ABCA1; this interaction is required for ABCA1 localization to the cell surface and is necessary for its normal activity and stability. As to expression, expressed in a number of other tissues besides skin, including heart, intestine, stomach, and kidney. Expressed mainly in the granular layer of the skin. Expressed in lung. Expressed in alpha and beta cells of pancreatic islets.

The protein resides in the cytoplasmic vesicle. It is found in the secretory vesicle membrane. Its subcellular location is the golgi apparatus membrane. The catalysed reaction is ATP + H2O + phospholipidSide 1 = ADP + phosphate + phospholipidSide 2.. The enzyme catalyses a beta-D-glucosylceramide(in) + ATP + H2O = a beta-D-glucosylceramide(out) + ADP + phosphate + H(+). Functionally, transports lipids such as glucosylceramides from the outer to the inner leaflet of lamellar granules (LGs) membrane, whereby the lipids are finally transported to the keratinocyte periphery via the trans-Golgi network and LGs and released to the apical surface of the granular keratinocytes to form lipid lamellae in the stratum corneum of the epidermis, which is essential for skin barrier function. In the meantime, participates in the transport of the lamellar granules-associated proteolytic enzymes, in turn regulates desquamation and keratinocyte differentiation. Furthermore, is essential for the regulation of cellular cholesterol homeostasis by regulating ABCA1-dependent cholesterol efflux from macrophages through interaction with NR1H2 and ABCA1. Plays pleiotropic roles in regulating glucose stimulated insulin secretion from beta cells, regulating the morphology and fusion of insulin granules, lipid raft abundance and the actin cytoskeleton. Also involved in lung surfactant biogenesis. The chain is Glucosylceramide transporter ABCA12 from Mus musculus (Mouse).